Consider the following 441-residue polypeptide: Transcriptional regulatory protein ZraR (441 aa).

The Response regulatory domain occupies 7-121 (DILVVDDDVS…RLQETLEKAL (115 aa)). Aspartate 56 carries the post-translational modification 4-aspartylphosphate. One can recognise a Sigma-54 factor interaction domain in the interval 141-370 (MIGSSPAMQH…LENAIERAVV (230 aa)). Residues glycine 172, threonine 173, arginine 329, and arginine 359 each contribute to the ATP site. Positions 421–440 (KTEAARQLGITRKTLLAKLS) form a DNA-binding region, H-T-H motif.

Forms homohexamers in the crystal structure. However, the dimerization interface between DNA-binding domains observed in the crystal structure suggests that dodecamers, rather than hexamers, might be the functionally important oligomer. Phosphorylated by ZraS.

The protein resides in the cytoplasm. With respect to regulation, activity of the ZraS/ZraR two-component system is repressed by the zinc-bound form of ZraP, which probably interacts with the periplasmic region of ZraS. Functionally, part of the Zra signaling pathway, an envelope stress response (ESR) system composed of the periplasmic accessory protein ZraP, the histidine kinase ZraS and the transcriptional regulator ZraR. The ZraPSR system contributes to antibiotic resistance and is important for membrane integrity in the presence of membrane-targeting biocides. ZraR is a member of the two-component regulatory system ZraS/ZraR. When activated by ZraS, acts in conjunction with sigma-54 to regulate the expression of zraP in the presence of high Zn(2+) or Pb(2+) concentrations. Also positively autoregulates the expression of the zraSR operon. The chain is Transcriptional regulatory protein ZraR from Salmonella typhimurium (strain LT2 / SGSC1412 / ATCC 700720).